The following is a 336-amino-acid chain: Hdr-like menaquinol oxidoreductase cytochrome b-like subunit (336 aa).

The next 6 helical transmembrane spans lie at 4–24, 60–80, 102–122, 145–165, 184–204, and 232–252; these read ALYIFYALPYICFAIFVIGTI, IDSPSSKFWAFVRVLFVVFLF, WLWLFAILFHYSLLVIVIRHL, VAIVPPLLMTGVIALVALAFL, HLILFFMAVILVSGLLMRYII, and LHWLFLIHFTFVCITIAYIPF.

The protein localises to the cell membrane. Its function is as follows. Has menaquinol-oxidizing activity. The HmeC and HmeD subunits may together mediate electron transfer from menaquinol to an unidentified electron acceptor on the cytoplasmic side of the membrane. This is Hdr-like menaquinol oxidoreductase cytochrome b-like subunit (hmeC) from Archaeoglobus profundus (strain DSM 5631 / JCM 9629 / NBRC 100127 / Av18).